The sequence spans 488 residues: Cytochrome P450 monooxygenase orf2 (488 aa).

Residues 7–27 (LPGIFLPLAGCVLALSLTTIV) form a helical membrane-spanning segment. Residue C432 participates in heme binding.

It belongs to the cytochrome P450 family. Requires heme as cofactor.

The protein localises to the membrane. It participates in secondary metabolite biosynthesis. Cytochrome P450 monooxygenase; part of the gene cluster that mediates the biosynthesis of nigerpyrone and its derivatives carbonarone A and pestalamide A. The biosynthesis pathway begins with the polyketide assembly by epaA to form phenylacetyl triketide precursor from successive condensation of two malonyl-CoA, presumably with one phenylacetyl-CoA starter unit produced by the phenylacetyl-CoA ligase epaB. For the nigerpyrone biosynthesis, the reactive polyketide chain is released as an aldehyde through the R-domain. A nonenzymatic cyclization and dehydration may create nigerpyrone. For the biosynthesis of carbonarone A and pestalamide A, an extra methyl group is added through the C-methyltransferase domain. Several further steps involving the dehydrogenase orf1, the cytochrome P450 monooxygenase orf2 and the FAD-dependent monooxygenase orf3 are required to form a carbonarone A precursor which is converted to carbonarone A via cyclization. The O-acetyltransferase epaC could catalyze the transfer of 2-methylsuccinyl-CoA, a common intermediate in the ethylmalonyl-CoA pathway, to generate the final product pestalamide A. This chain is Cytochrome P450 monooxygenase orf2, found in Aspergillus niger (strain ATCC MYA-4892 / CBS 513.88 / FGSC A1513).